Consider the following 220-residue polypeptide: Nitrile hydratase subunit beta (220 aa).

The protein belongs to the nitrile hydratase subunit beta family. In terms of assembly, heterodimer of an alpha and a beta chain.

It catalyses the reaction an aliphatic primary amide = an aliphatic nitrile + H2O. NHase catalyzes the hydration of various nitrile compounds to the corresponding amides. This Pseudomonas chlororaphis (Pseudomonas aureofaciens) protein is Nitrile hydratase subunit beta (nthB).